A 100-amino-acid chain; its full sequence is NADH-quinone oxidoreductase subunit K (100 aa).

3 consecutive transmembrane segments (helical) span residues 1-21 (MIGL…GLAG), 28-48 (ILLL…GFVA), and 64-84 (FIIA…ILWF).

Belongs to the complex I subunit 4L family. As to quaternary structure, NDH-1 is composed of 14 different subunits. Subunits NuoA, H, J, K, L, M, N constitute the membrane sector of the complex.

Its subcellular location is the cell inner membrane. The enzyme catalyses a quinone + NADH + 5 H(+)(in) = a quinol + NAD(+) + 4 H(+)(out). In terms of biological role, NDH-1 shuttles electrons from NADH, via FMN and iron-sulfur (Fe-S) centers, to quinones in the respiratory chain. The immediate electron acceptor for the enzyme in this species is believed to be ubiquinone. Couples the redox reaction to proton translocation (for every two electrons transferred, four hydrogen ions are translocated across the cytoplasmic membrane), and thus conserves the redox energy in a proton gradient. In Helicobacter pylori (strain B38), this protein is NADH-quinone oxidoreductase subunit K.